The following is a 431-amino-acid chain: Large envelope protein (431 aa).

G2 carries N-myristoyl glycine; by host lipidation. The pre-S1 stretch occupies residues G2–L148. The pre-S stretch occupies residues G2 to S207. The Virion surface; in external conformation segment spans residues G2–S214. The Intravirion; in internal conformation portion of the chain corresponds to G2 to R286. Residue N3 is glycosylated (N-linked (GlcNAc...) asparagine). The disordered stretch occupies residues I115–H147. The pre-S2 stretch occupies residues T149–S207. A helical transmembrane segment spans residues L215–I235. The Intravirion; in external conformation segment spans residues A236–R286. Residues F287 to W307 traverse the membrane as a helical segment. Over K308–N379 the chain is Virion surface. An N-linked (GlcNAc...) asparagine; by host glycan is attached at N351. Residues L380 to I400 form a helical membrane-spanning segment. Residues W401–W406 are Intravirion-facing. The chain crosses the membrane as a helical span at residues G407–V429. Topologically, residues Y430–I431 are virion surface.

It belongs to the orthohepadnavirus major surface antigen family. In its internal form (Li-HBsAg), interacts with the capsid protein and with the isoform S. Interacts with host chaperone CANX. In terms of assembly, associates with host chaperone CANX through its pre-S2 N glycan; this association may be essential for isoform M proper secretion. As to quaternary structure, interacts with isoform L. Interacts with the antigens of satellite virus HDV (HDVAgs); this interaction is required for encapsidation of HDV genomic RNA. In terms of processing, isoform M is N-terminally acetylated by host at a ratio of 90%, and N-glycosylated by host at the pre-S2 region. Post-translationally, myristoylated.

The protein localises to the virion membrane. Its function is as follows. The large envelope protein exists in two topological conformations, one which is termed 'external' or Le-HBsAg and the other 'internal' or Li-HBsAg. In its external conformation the protein attaches the virus to cell receptors and thereby initiating infection. This interaction determines the species specificity and liver tropism. This attachment induces virion internalization predominantly through caveolin-mediated endocytosis. The large envelope protein also assures fusion between virion membrane and endosomal membrane. In its internal conformation the protein plays a role in virion morphogenesis and mediates the contact with the nucleocapsid like a matrix protein. The middle envelope protein plays an important role in the budding of the virion. It is involved in the induction of budding in a nucleocapsid independent way. In this process the majority of envelope proteins bud to form subviral lipoprotein particles of 22 nm of diameter that do not contain a nucleocapsid. This Woodchuck hepatitis B virus (isolate 7) (WHV) protein is Large envelope protein.